A 507-amino-acid polypeptide reads, in one-letter code: RNA-binding protein Nova-1 (507 aa).

The disordered stretch occupies residues 1–44 (MMAAAPIQQNGTHTGVPIDLDPPDSRKRPLEAPPEAGSTKRTNT). The Bipartite nuclear localization signal signature appears at 27 to 43 (KRPLEAPPEAGSTKRTN). Positions 49-116 (QYFLKVLIPS…EALNAVHGFI (68 aa)) constitute a KH 1 domain. A disordered region spans residues 139–171 (QTTVNPDRIKQTLPSSPTTTKSSPSDPMTTSRA). The segment covering 150–169 (TLPSSPTTTKSSPSDPMTTS) has biased composition (low complexity). Phosphoserine is present on Ser-154. KH domains lie at 171–237 (ANQV…VELI) and 421–488 (KDVV…QYLI). The segment at 419–503 (GSKDVVEIAV…YEQGVRAANP (85 aa)) is required for RNA binding.

In terms of assembly, interacts with PTBP2; the interaction is direct. In terms of tissue distribution, expressed in neurons of the cortex, sub-cortex, cerebellum and brainstem (at protein level). Expressed in motor neurons, but not in glia.

It localises to the nucleus. Functionally, functions to regulate alternative splicing in neurons by binding pre-mRNA in a sequence-specific manner to activate exon inclusion or exclusion. It binds specifically to the sequences 5'-YCAY-3' and regulates splicing in only a subset of regulated exons. Binding to an exonic 5'-YCAY-3' cluster changes the protein complexes assembled on pre-mRNA, blocking U1 snRNP binding and exon inclusion, whereas binding to an intronic 5'-YCAY-3' cluster enhances spliceosome assembly and exon inclusion. Binding to 5'-YCAY-3' clusters results in a local and asymmetric action to regulate spliceosome assembly and alternative splicing in neurons. Binding to an exonic 5'-YCAY-3' cluster changed the protein complexes assembled on pre-mRNA, blocking U1 snRNP (small nuclear ribonucleoprotein) binding and exon inclusion, whereas binding to an intronic 5'-YCAY-3' cluster enhanced spliceosome assembly and exon inclusion. With NOVA1, they perform unique biological functions in different brain areas and cell types. Autoregulates its own expression by acting as a splicing repressor. Acts to activate the inclusion of exon E3A in the glycine receptor alpha-2 chain and of exon E9 in gamma-aminobutyric-acid receptor gamma-2 subunit via a distal downstream UCAU-rich intronic splicing enhancer. Acts to regulate a novel glycine receptor alpha-2 chain splice variant (alpha-2N) in developing spinal cord. The sequence is that of RNA-binding protein Nova-1 from Mus musculus (Mouse).